We begin with the raw amino-acid sequence, 1365 residues long: Patatin-like phospholipase domain-containing protein 6 (1365 aa).

Residues 1-50 (MGTSSHGLATNSSGAKVAERDGFQDVPAPGEGAAGRICGAQPVPFVPQVL) lie on the Lumenal side of the membrane. N-linked (GlcNAc...) asparagine glycosylation occurs at N11. A helical transmembrane segment spans residues 51–71 (GVMIGAGVAVVVTAVLILLVV). Residues 72–1365 (RRLRVPKTPA…QEPPGSATDA (1294 aa)) lie on the Cytoplasmic side of the membrane. 186–313 (VLGHFEKPLF…VRVVQIIMVR (128 aa)) provides a ligand contact to a nucleoside 3',5'-cyclic phosphate. Disordered regions lie at residues 343–427 (FPSP…RSDF) and 441–463 (QEGA…PREQ). Position 345 is a phosphoserine (S345). Residues 350 to 367 (TRTSPVRGSKRMVSTSAT) are compositionally biased toward polar residues. Phosphothreonine is present on T352. 2 positions are modified to phosphoserine: S353 and S363. Positions 375 to 389 (GRPPDPTGAPLPGPT) are enriched in pro residues. S411 carries the phosphoserine modification. A Phosphothreonine modification is found at T455. Residues 502-624 (ELAK…VAAR) and 620-740 (TVAA…LSQK) each bind a nucleoside 3',5'-cyclic phosphate. The PNPLA domain maps to 971–1137 (LVLGGGGARG…INNLPADIAR (167 aa)). The short motif at 975 to 980 (GGGARG) is the GXGXXG element. Residues 1002–1006 (GTSIG) carry the GXSXG motif. The Nucleophile role is filled by S1004. The active-site Proton acceptor is D1124. Positions 1124–1126 (DGG) match the DGA/G motif. The disordered stretch occupies residues 1296-1365 (SYVSDGCADG…QEPPGSATDA (70 aa)). The segment covering 1303 to 1319 (ADGEESDCLTEYEEDAG) has biased composition (acidic residues).

Belongs to the NTE family. Glycosylated.

The protein resides in the endoplasmic reticulum membrane. The enzyme catalyses a 1-acyl-sn-glycero-3-phosphocholine + H2O = sn-glycerol 3-phosphocholine + a fatty acid + H(+). It catalyses the reaction 1-hexadecanoyl-sn-glycero-3-phosphocholine + H2O = sn-glycerol 3-phosphocholine + hexadecanoate + H(+). The catalysed reaction is 1-(9Z-octadecenoyl)-sn-glycero-3-phosphocholine + H2O = sn-glycerol 3-phosphocholine + (9Z)-octadecenoate + H(+). It carries out the reaction 1-hexadecanoylglycerol + H2O = glycerol + hexadecanoate + H(+). The enzyme catalyses 2-hexadecanoylglycerol + H2O = glycerol + hexadecanoate + H(+). It catalyses the reaction 1-(9Z-octadecenoyl)-glycerol + H2O = glycerol + (9Z)-octadecenoate + H(+). The catalysed reaction is 2-(9Z-octadecenoyl)-glycerol + H2O = glycerol + (9Z)-octadecenoate + H(+). It carries out the reaction 2-(5Z,8Z,11Z,14Z-eicosatetraenoyl)-glycerol + H2O = glycerol + (5Z,8Z,11Z,14Z)-eicosatetraenoate + H(+). The enzyme catalyses 1-hexadecanoyl-sn-glycero-3-phosphate + H2O = sn-glycerol 3-phosphate + hexadecanoate + H(+). With respect to regulation, inhibited by a series a OPs such as mipafox (MPX), phenyl saligenin phosphate (PSP), phenyl dipentyl phosphinate (PDPP), diisopropyl fluorophosphate and paraoxon. Functionally, phospholipase B that deacylates intracellular phosphatidylcholine (PtdCho), generating glycerophosphocholine (GroPtdCho). This deacylation occurs at both sn-2 and sn-1 positions of PtdCho. Catalyzes the hydrolysis of several naturally occurring membrane-associated lipids. Hydrolyzes lysophospholipids and monoacylglycerols, preferring the 1-acyl to the 2-acyl isomer. Does not catalyze hydrolysis of di- or triacylglycerols or fatty acid amides. This Pongo abelii (Sumatran orangutan) protein is Patatin-like phospholipase domain-containing protein 6 (PNPLA6).